A 264-amino-acid chain; its full sequence is MKQYLDLMRLVREHGTFKSDRTGTGTFSVFGHQMRFDLAEGFPLVTTKKCHLKSIVHELLWFLKGDTNIRYLKENGVSIWDEWADGNGDLGPVYGYQWRSWPAPDGRHIDQIANVVNMIRDNPDSRRLIVSAWNPALIDEMKLPPCHALFQFYVADGRLSCQLYQRSADIFLGVPFNIASYALLILMMAQVTGLAPGEFVWTGGDCHLYANHLEQADLQLSREPLPLPTMQLDPDVKDLFAFRFEDFELVGYQSHPHIKAPVAI.

Arg-21 serves as a coordination point for dUMP. His-51 contributes to the (6R)-5,10-methylene-5,6,7,8-tetrahydrofolate binding site. 126–127 (RR) contributes to the dUMP binding site. The Nucleophile role is filled by Cys-146. Residues 166-169 (RSAD), Asn-177, and 207-209 (HLY) each bind dUMP. Asp-169 provides a ligand contact to (6R)-5,10-methylene-5,6,7,8-tetrahydrofolate. Ala-263 contributes to the (6R)-5,10-methylene-5,6,7,8-tetrahydrofolate binding site.

This sequence belongs to the thymidylate synthase family. Bacterial-type ThyA subfamily. As to quaternary structure, homodimer.

The protein localises to the cytoplasm. The enzyme catalyses dUMP + (6R)-5,10-methylene-5,6,7,8-tetrahydrofolate = 7,8-dihydrofolate + dTMP. Its pathway is pyrimidine metabolism; dTTP biosynthesis. Catalyzes the reductive methylation of 2'-deoxyuridine-5'-monophosphate (dUMP) to 2'-deoxythymidine-5'-monophosphate (dTMP) while utilizing 5,10-methylenetetrahydrofolate (mTHF) as the methyl donor and reductant in the reaction, yielding dihydrofolate (DHF) as a by-product. This enzymatic reaction provides an intracellular de novo source of dTMP, an essential precursor for DNA biosynthesis. This Azotobacter vinelandii (strain DJ / ATCC BAA-1303) protein is Thymidylate synthase.